Reading from the N-terminus, the 246-residue chain is UPF0736 protein Aflv_2136 (246 aa).

The protein belongs to the UPF0736 family.

The chain is UPF0736 protein Aflv_2136 from Anoxybacillus flavithermus (strain DSM 21510 / WK1).